A 757-amino-acid chain; its full sequence is Protein hunchback (757 aa).

Disordered stretches follow at residues 30 to 51 (EPGH…PIPS) and 171 to 213 (EKLQ…EDMK). Residues 39-51 (SVASSPRQSPIPS) show a composition bias toward polar residues. The span at 197-213 (EPEKEHDQMSNSSEDMK) shows a compositional bias: basic and acidic residues. 4 consecutive C2H2-type zinc fingers follow at residues 239 to 261 (YKCK…TRTH), 268 to 290 (LQCP…IRKH), 296 to 318 (FQCD…RKSH), and 324 to 348 (YRCA…KYGH). 3 disordered regions span residues 367 to 416 (DVYG…VATS), 511 to 535 (EQLQ…YERK), and 602 to 694 (MTSP…APPS). 2 stretches are compositionally biased toward low complexity: residues 397 to 414 (VAAV…QPVA) and 512 to 521 (QLQQQNQQQS). The segment covering 522–531 (DNEEEDQDDE) has biased composition (acidic residues). The segment covering 651-694 (ANTSASSTASSSGNSSNASSNSNGNSSSNSSSNGTTSAVAAPPS) has biased composition (low complexity). 2 C2H2-type zinc fingers span residues 704–726 (YECK…MGYH) and 732–756 (FKCN…RNAH).

It belongs to the hunchback C2H2-type zinc-finger protein family.

The protein localises to the nucleus. Functionally, gap class segmentation protein that controls development of head structures. This is Protein hunchback (hb) from Drosophila sechellia (Fruit fly).